The sequence spans 133 residues: Small ribosomal subunit protein uS8 (133 aa).

Belongs to the universal ribosomal protein uS8 family. As to quaternary structure, part of the 30S ribosomal subunit. Contacts proteins S5 and S12.

In terms of biological role, one of the primary rRNA binding proteins, it binds directly to 16S rRNA central domain where it helps coordinate assembly of the platform of the 30S subunit. This chain is Small ribosomal subunit protein uS8, found in Prochlorococcus marinus (strain MIT 9313).